Consider the following 162-residue polypeptide: 6,7-dimethyl-8-ribityllumazine synthase (162 aa).

5-amino-6-(D-ribitylamino)uracil is bound by residues phenylalanine 22, 56–58 (TFE), and 80–82 (AVI). Position 85–86 (85–86 (GT)) interacts with (2S)-2-hydroxy-3-oxobutyl phosphate. The active-site Proton donor is the histidine 88. Methionine 113 is a binding site for 5-amino-6-(D-ribitylamino)uracil. Arginine 127 lines the (2S)-2-hydroxy-3-oxobutyl phosphate pocket.

It belongs to the DMRL synthase family.

It catalyses the reaction (2S)-2-hydroxy-3-oxobutyl phosphate + 5-amino-6-(D-ribitylamino)uracil = 6,7-dimethyl-8-(1-D-ribityl)lumazine + phosphate + 2 H2O + H(+). It participates in cofactor biosynthesis; riboflavin biosynthesis; riboflavin from 2-hydroxy-3-oxobutyl phosphate and 5-amino-6-(D-ribitylamino)uracil: step 1/2. Catalyzes the formation of 6,7-dimethyl-8-ribityllumazine by condensation of 5-amino-6-(D-ribitylamino)uracil with 3,4-dihydroxy-2-butanone 4-phosphate. This is the penultimate step in the biosynthesis of riboflavin. The polypeptide is 6,7-dimethyl-8-ribityllumazine synthase (Anaeromyxobacter dehalogenans (strain 2CP-1 / ATCC BAA-258)).